We begin with the raw amino-acid sequence, 660 residues long: MSLHISKLIEQYRSTKDNDLKYMLLRQNFKINDIEDELAPLVNELLLPVLVEEQDMEILNLVSFQVLPDLVLSMISDPAAAQLGWVISLICDPLLNQSMIHANRSFVLIETLRNVLQKIENSPHLDYHQPVNSSLEFISKFIVEMKRHMCDVDAAQLSHSLSESNMLIYIESLNLLLKFSFFSDAASPSVMVTLPFDILNDVFTIAQDYSATNTNESIDRITEKLLLTSTQLTHPVDLENLCPKMKYNTLAAVSRIWYKFGPIVDKLFTNRLLPVLFPPQMGEECNVEDVLEIVHNFHPYFSIRRLKDNRPLLSDSTISQLREGLFGMLSILNDSLTRTQNENDHGSDNLIDSDDGFGSDNDPEQQAYLDELVSEGYDENMYDGDTDDEDADDINVEKNDEATKDITETNKILLIFSELHYPQEERFSELLVELQTKIAINTSLIDKILSKETTELPTHNGEIADLNEILNEVKGNKPIRKNVIFCTLAHTLSLQSGSELSVLQLSIEVIDHLLVKNHSNNITRGEQFQLIKLILPHLKTNKSFIDTLKAGNFTQKIDEGVTLRTMILSLLLQLFPLDYSMLGEILPTIARYSVRDKDLGVRDLSFQLLDQILRTYYNYLIGIDWEWYKDDFYQVLQETCIKKDINTNLLLQFPPYLPHD.

Lys-16 participates in a covalent cross-link: Glycyl lysine isopeptide (Lys-Gly) (interchain with G-Cter in NEDD8). The segment at 339–364 is disordered; that stretch reads TQNENDHGSDNLIDSDDGFGSDNDPE. Residues 351 to 363 are compositionally biased toward acidic residues; it reads IDSDDGFGSDNDP.

As to quaternary structure, interacts with unneddylated cullin CDC53. Neddylated at Lys-16.

Its function is as follows. Assembly factor of SCF (SKP1-CUL1-F-box protein) E3 ubiquitin ligase complexes that promotes the exchange of the substrate-recognition F-box subunit in SCF complexes, thereby playing a key role in the cellular repertoire of SCF complexes. Acts as a F-box protein exchange factor. Involved in the aging process. Longevity-assurance protein. This Saccharomyces cerevisiae (strain ATCC 204508 / S288c) (Baker's yeast) protein is Cullin-associated NEDD8-dissociated protein 1 homolog (LAG2).